Reading from the N-terminus, the 619-residue chain is Protein CPn_1016/CP_0837/CPj1016/CpB1054 (619 aa).

The segment at 591–619 (NAKKSEEQTSPQETPEVIRVSYPTTTSAL) is disordered.

The protein belongs to the chlamydial CPn_1016/CT_858/TC_0248 family.

This chain is Protein CPn_1016/CP_0837/CPj1016/CpB1054, found in Chlamydia pneumoniae (Chlamydophila pneumoniae).